We begin with the raw amino-acid sequence, 379 residues long: Heme chaperone HemW (379 aa).

One can recognise a Radical SAM core domain in the interval 1–232 (MLQKPNSAYF…MDILAKNGYN (232 aa)). Tyrosine 9 contacts S-adenosyl-L-methionine. [4Fe-4S] cluster-binding residues include cysteine 15, cysteine 19, and cysteine 22. Residues glycine 60, 61 to 62 (GT), glutamate 93, glutamine 120, arginine 132, and aspartate 157 each bind S-adenosyl-L-methionine.

It belongs to the anaerobic coproporphyrinogen-III oxidase family. HemW subfamily. In terms of assembly, homodimer.

The protein localises to the cytoplasm. The protein resides in the cell membrane. In terms of biological role, could serve in the delivery of heme to a membrane-localized target protein. Binds one molecule of heme per monomer, possibly covalently; heme and Fe-S cluster binding are independent. Incubation with the reductant sodium dithionite increases binding. Does not have coproporphyrinogen III dehydrogenase activity in vitro, does not complement an E.coli hemN deletion in vivo. Binds 1 Fe-S cluster, it is probably [4Fe-4S]. The cluster is coordinated with 3 cysteines and an exchangeable S-adenosyl-L-methionine; only dimeric protein has the cluster. This Lactococcus lactis subsp. lactis (strain IL1403) (Streptococcus lactis) protein is Heme chaperone HemW.